Here is a 534-residue protein sequence, read N- to C-terminus: Cytochrome P450 714B1 (534 aa).

A topological domain (lumenal) is located at residue Met-1. A helical; Signal-anchor for type III membrane protein membrane pass occupies residues 2-22 (VVVVAAAMAAASLCCGVAAYL). Over 23–534 (YYVLWLAPER…RSKCDWAGFD (512 aa)) the chain is Cytoplasmic. Cys-472 contacts heme.

The protein belongs to the cytochrome P450 family. Heme serves as cofactor. In terms of tissue distribution, highly expressed in spikelet and uppermost internode. Detected in shoots, roots, leaves and anthers.

It is found in the membrane. In terms of biological role, catalyzes the 13-hydroxylation of gibberellins (GAs). Determines the ratio of GA4 and GA1. Converts GA12 into GA53. The protein is Cytochrome P450 714B1 (CYP714B1) of Oryza sativa subsp. japonica (Rice).